Reading from the N-terminus, the 674-residue chain is Translation initiation factor IF-2 (674 aa).

One can recognise a tr-type G domain in the interval 174 to 344 (IRPPVVTVMG…LLVAELREIK (171 aa)). Residues 183-190 (GHVDHGKT) form a G1 region. 183 to 190 (GHVDHGKT) is a binding site for GTP. A G2 region spans residues 208 to 212 (GITQS). The tract at residues 229–232 (DTPG) is G3. Residues 229–233 (DTPGH) and 283–286 (NKID) each bind GTP. A G4 region spans residues 283-286 (NKID). The G5 stretch occupies residues 320–322 (SAR).

It belongs to the TRAFAC class translation factor GTPase superfamily. Classic translation factor GTPase family. IF-2 subfamily.

Its subcellular location is the cytoplasm. One of the essential components for the initiation of protein synthesis. Protects formylmethionyl-tRNA from spontaneous hydrolysis and promotes its binding to the 30S ribosomal subunits. Also involved in the hydrolysis of GTP during the formation of the 70S ribosomal complex. In Pseudothermotoga lettingae (strain ATCC BAA-301 / DSM 14385 / NBRC 107922 / TMO) (Thermotoga lettingae), this protein is Translation initiation factor IF-2.